A 2375-amino-acid polypeptide reads, in one-letter code: CCR4-NOT transcription complex subunit 1 (2375 aa).

3 consecutive short sequence motifs (LXXLL) follow at residues 153–157 (LPDLL), 181–185 (LHLLL), and 223–227 (LAPLL). Residue Ser318 is modified to Phosphoserine. An LXXLL motif is present at residues 570-574 (LSMLL). The tract at residues 725–770 (SAAPHTQSMQGFPPNLGSAFSTPQSPAKAFPPLSTPNQTTAFSGIG) is disordered. Residues 799–1014 (NNDPFVQRKL…QGSITTPGSI (216 aa)) form an interaction with ZFP36 region. Ser1060 carries the phosphoserine modification. An interaction with CNOT6, CNOT6L, CNOT7 and CNOT8 region spans residues 1089–1604 (EPPENIQEKI…AQPMKQAWAT (516 aa)). Residues 1314–1326 (QLSAPKKDVKQPE) are compositionally biased toward basic and acidic residues. A disordered region spans residues 1314–1351 (QLSAPKKDVKQPEELPAITTTTTSTTPATSTTCTATVP). Low complexity predominate over residues 1332 to 1349 (TTTTTSTTPATSTTCTAT). Short sequence motifs (LXXLL) lie at residues 1638 to 1642 (LRSLL), 1941 to 1945 (LIALL), and 2095 to 2099 (LRVLL).

This sequence belongs to the CNOT1 family. In terms of assembly, component of the CCR4-NOT complex; distinct complexes seem to exist that differ in the participation of probably mutually exclusive catalytic subunits. In the complex, interacts directly with CNOT6, CNOT6L, CNOT7 or CNOT8. Interacts in a ligand-dependent fashion with ESR1 and RXRA. Interacts with NANOS2, TOB1 and ZFP36. Interacts with TNRC6A, TNRC6B or TNRC6C; the interactions are direct. Interacts with YTHDF2; the interaction is direct and promotes recruitment of the CCR4-NOT complex to N6-methyladenosine (m6A)-containing mRNAs, leading to their deadenylation and subsequent degradation. Interacts with EIF4ENIF1/4E-T. Interacts in an RNA-independent manner with BICC1 (via KH domains). Interacts with TEX13A; the interaction may inhibit CNOT1 binding to mRNA and subsequently CNOT1-mediated mRNA degradation.

It is found in the cytoplasm. The protein resides in the P-body. It localises to the nucleus. In terms of biological role, scaffolding component of the CCR4-NOT complex which is one of the major cellular mRNA deadenylases and is linked to various cellular processes including bulk mRNA degradation, miRNA-mediated repression, translational repression during translational initiation and general transcription regulation. Additional complex functions may be a consequence of its influence on mRNA expression. Its scaffolding function implies its interaction with the catalytic complex module and diverse RNA-binding proteins mediating the complex recruitment to selected mRNA 3'UTRs. Involved in degradation of AU-rich element (ARE)-containing mRNAs probably via association with ZFP36. Mediates the recruitment of the CCR4-NOT complex to miRNA targets and to the RISC complex via association with TNRC6A, TNRC6B or TNRC6C. Acts as a transcriptional repressor. Represses the ligand-dependent transcriptional activation by nuclear receptors. Involved in the maintenance of embryonic stem (ES) cell identity; prevents their differentiation towards extraembryonic trophectoderm lineages. Plays a role in rapid sperm motility via mediating timely mRNA turnover. This chain is CCR4-NOT transcription complex subunit 1 (Cnot1), found in Mus musculus (Mouse).